Here is a 203-residue protein sequence, read N- to C-terminus: Putative 3-methyladenine DNA glycosylase (203 aa).

The protein belongs to the DNA glycosylase MPG family.

The protein is Putative 3-methyladenine DNA glycosylase of Clostridium tetani (strain Massachusetts / E88).